A 626-amino-acid chain; its full sequence is Serine/threonine-protein kinase PknH (626 aa).

The Cytoplasmic portion of the chain corresponds to 1 to 403 (MSDAQDSRVG…QTPRKTNPWP (403 aa)). Residues 16–276 (YHLKRLLGRG…DLALAAHEAL (261 aa)) form the Protein kinase domain. ATP is bound by residues 22-30 (LGRGGMGEV) and Lys45. The Proton acceptor role is filled by Asp139. Thr170 bears the Phosphothreonine mark. The interval 292-396 (QESTLPAPPK…GGPSPWAQTP (105 aa)) is disordered. Pro residues-rich tracts occupy residues 297-308 (PAPPKPVPPPTM) and 316-342 (RQPPAPPVTPPGVQPAPKPSYTPPAQP). Over residues 343–355 (GPAGQRPGPTGQP) the composition is skewed to low complexity. A helical membrane pass occupies residues 404–424 (LVAGAAAVVLVLVLGAIGIWI). At 425–626 (AIRPKPVQPP…AKIVDKVNKE (202 aa)) the chain is on the extracellular side. Cystine bridges form between Cys482-Cys545 and Cys587-Cys604.

Belongs to the protein kinase superfamily. Ser/Thr protein kinase family. Requires a divalent metal cation as cofactor. In terms of processing, autophosphorylated on threonine and serine residues. Dephosphorylated by PstP.

It is found in the cell membrane. The enzyme catalyses L-seryl-[protein] + ATP = O-phospho-L-seryl-[protein] + ADP + H(+). It catalyses the reaction L-threonyl-[protein] + ATP = O-phospho-L-threonyl-[protein] + ADP + H(+). Inhibited by the kinase inhibitors staurosporine and H-7. In terms of biological role, may regulate bacterial growth in response to external signals to facilitate adaptation to the host environment. In vitro, phosphorylates several substrates such as EmbR, DevR (DosR), DacB1 and Rv0681. The protein is Serine/threonine-protein kinase PknH (pknH) of Mycobacterium tuberculosis (strain ATCC 25618 / H37Rv).